A 128-amino-acid polypeptide reads, in one-letter code: Probable 4-amino-4-deoxy-L-arabinose-phosphoundecaprenol flippase subunit ArnF (128 aa).

Residues 1–2 are Cytoplasmic-facing; sequence MG. Residues 3–23 form a helical membrane-spanning segment; the sequence is LMWGLFSVIIASVAQLSLGFA. At 24–35 the chain is on the periplasmic side; that stretch reads ASHLPPMTHLWD. The chain crosses the membrane as a helical span at residues 36-56; sequence FIATLLAFGLDARILLLGLLG. Residues 57-77 lie on the Cytoplasmic side of the membrane; it reads YLLSVFCWYKTLHKLALSKAY. A helical membrane pass occupies residues 78 to 98; the sequence is ALLSMSYVLVWIASMVLPGWG. Residues 99–100 are Periplasmic-facing; the sequence is GT. Residues 101 to 121 traverse the membrane as a helical segment; sequence FSLKALLGVACIMSGLMLIFL. The Cytoplasmic portion of the chain corresponds to 122 to 128; it reads PTTKQRY.

The protein belongs to the ArnF family. Heterodimer of ArnE and ArnF.

It localises to the cell inner membrane. The protein operates within bacterial outer membrane biogenesis; lipopolysaccharide biosynthesis. In terms of biological role, translocates 4-amino-4-deoxy-L-arabinose-phosphoundecaprenol (alpha-L-Ara4N-phosphoundecaprenol) from the cytoplasmic to the periplasmic side of the inner membrane. This is Probable 4-amino-4-deoxy-L-arabinose-phosphoundecaprenol flippase subunit ArnF from Shigella dysenteriae serotype 1 (strain Sd197).